The chain runs to 421 residues: Serine hydroxymethyltransferase (421 aa).

(6S)-5,6,7,8-tetrahydrofolate is bound by residues Leu-118 and 122–124 (GHL). Lys-226 is subject to N6-(pyridoxal phosphate)lysine.

This sequence belongs to the SHMT family. Homodimer. It depends on pyridoxal 5'-phosphate as a cofactor.

It is found in the cytoplasm. It carries out the reaction (6R)-5,10-methylene-5,6,7,8-tetrahydrofolate + glycine + H2O = (6S)-5,6,7,8-tetrahydrofolate + L-serine. The protein operates within one-carbon metabolism; tetrahydrofolate interconversion. Its pathway is amino-acid biosynthesis; glycine biosynthesis; glycine from L-serine: step 1/1. Its function is as follows. Catalyzes the reversible interconversion of serine and glycine with tetrahydrofolate (THF) serving as the one-carbon carrier. This reaction serves as the major source of one-carbon groups required for the biosynthesis of purines, thymidylate, methionine, and other important biomolecules. Also exhibits THF-independent aldolase activity toward beta-hydroxyamino acids, producing glycine and aldehydes, via a retro-aldol mechanism. This Mycoplasmopsis agalactiae (strain NCTC 10123 / CIP 59.7 / PG2) (Mycoplasma agalactiae) protein is Serine hydroxymethyltransferase.